The following is a 385-amino-acid chain: Succinate--CoA ligase [ADP-forming] subunit beta (385 aa).

The ATP-grasp domain maps to 9–244 (KEILRKYGVP…QDEEDPLETR (236 aa)). Residues K46, 53–55 (GRG), E99, C102, and E107 each bind ATP. Mg(2+) contacts are provided by N199 and D213. Residues N264 and 321–323 (GIM) contribute to the substrate site.

It belongs to the succinate/malate CoA ligase beta subunit family. As to quaternary structure, heterotetramer of two alpha and two beta subunits. Mg(2+) is required as a cofactor.

It carries out the reaction succinate + ATP + CoA = succinyl-CoA + ADP + phosphate. It catalyses the reaction GTP + succinate + CoA = succinyl-CoA + GDP + phosphate. It participates in carbohydrate metabolism; tricarboxylic acid cycle; succinate from succinyl-CoA (ligase route): step 1/1. Succinyl-CoA synthetase functions in the citric acid cycle (TCA), coupling the hydrolysis of succinyl-CoA to the synthesis of either ATP or GTP and thus represents the only step of substrate-level phosphorylation in the TCA. The beta subunit provides nucleotide specificity of the enzyme and binds the substrate succinate, while the binding sites for coenzyme A and phosphate are found in the alpha subunit. This chain is Succinate--CoA ligase [ADP-forming] subunit beta, found in Rickettsia bellii (strain RML369-C).